Here is an 816-residue protein sequence, read N- to C-terminus: uncharacterized protein (816 aa).

Disordered regions lie at residues 1-81 (MDVV…NSNN) and 391-411 (LGSN…NNDF). Residues 28 to 44 (EVPPQRPRQQNRWKPWW) show a composition bias toward low complexity. Polar residues predominate over residues 64 to 81 (QGRSSPTTDFQDSVNSNN). A phosphoserine mark is found at serine 76 and serine 79. Over residues 391–400 (LGSNSSTNEN) the composition is skewed to low complexity.

This is an uncharacterized protein from Saccharomyces cerevisiae (strain ATCC 204508 / S288c) (Baker's yeast).